A 169-amino-acid polypeptide reads, in one-letter code: Crossover junction endodeoxyribonuclease RuvC (169 aa).

Residues D11, E71, and D143 contribute to the active site. Mg(2+) contacts are provided by D11, E71, and D143.

The protein belongs to the RuvC family. Homodimer which binds Holliday junction (HJ) DNA. The HJ becomes 2-fold symmetrical on binding to RuvC with unstacked arms; it has a different conformation from HJ DNA in complex with RuvA. In the full resolvosome a probable DNA-RuvA(4)-RuvB(12)-RuvC(2) complex forms which resolves the HJ. Requires Mg(2+) as cofactor.

It is found in the cytoplasm. It catalyses the reaction Endonucleolytic cleavage at a junction such as a reciprocal single-stranded crossover between two homologous DNA duplexes (Holliday junction).. Its function is as follows. The RuvA-RuvB-RuvC complex processes Holliday junction (HJ) DNA during genetic recombination and DNA repair. Endonuclease that resolves HJ intermediates. Cleaves cruciform DNA by making single-stranded nicks across the HJ at symmetrical positions within the homologous arms, yielding a 5'-phosphate and a 3'-hydroxyl group; requires a central core of homology in the junction. The consensus cleavage sequence is 5'-(A/T)TT(C/G)-3'. Cleavage occurs on the 3'-side of the TT dinucleotide at the point of strand exchange. HJ branch migration catalyzed by RuvA-RuvB allows RuvC to scan DNA until it finds its consensus sequence, where it cleaves and resolves the cruciform DNA. The sequence is that of Crossover junction endodeoxyribonuclease RuvC from Rhizobium leguminosarum bv. trifolii (strain WSM2304).